Here is a 357-residue protein sequence, read N- to C-terminus: MPKKVFQQEDVEQKITENFEPKQEFEQDELDIEMDCSQFETTMDRQNTDIPFQHMVRPKVTMWQKLLMATICLFSCGILAQSVQWLVDSWRDNQWIAFVFAMVSLFLVLLGLGAIIKEWRRLVQLKKRLILQEKSREIRSKSAVNLTEVSSEGKELCLKIASLMGIDDKSPQLIAWQEQVHEAYTEQEILRLFSQNVLIPFDRVAKKLISKNAVESALIVAVSPLAIVDMFFIAWRNIRLINQLAKLYGIELGYVSRLRLLRMVFVNMAFAGAADVIQDLGLEWLSQDITAKLSARVAQGIGVGILTARLGIKAMEFCRPIAVAPEEKLRLSHIQTELLGTLKTTLFSANKVKEKVR.

3 consecutive transmembrane segments (helical) span residues 67-87 (LMAT…QWLV), 96-116 (IAFV…GAII), and 213-233 (AVES…MFFI).

This sequence belongs to the UPF0283 family.

It is found in the cell inner membrane. The polypeptide is UPF0283 membrane protein HS_0596 (Histophilus somni (strain 129Pt) (Haemophilus somnus)).